A 1423-amino-acid polypeptide reads, in one-letter code: DNA-directed RNA polymerase subunit beta' (1423 aa).

Zn(2+)-binding residues include Cys71, Cys73, Cys86, and Cys89. Mg(2+) is bound by residues Asp461, Asp463, and Asp465. The Zn(2+) site is built by Cys815, Cys889, Cys896, and Cys899.

Belongs to the RNA polymerase beta' chain family. The RNAP catalytic core consists of 2 alpha, 1 beta, 1 beta' and 1 omega subunit. When a sigma factor is associated with the core the holoenzyme is formed, which can initiate transcription. The cofactor is Mg(2+). Zn(2+) is required as a cofactor.

The catalysed reaction is RNA(n) + a ribonucleoside 5'-triphosphate = RNA(n+1) + diphosphate. DNA-dependent RNA polymerase catalyzes the transcription of DNA into RNA using the four ribonucleoside triphosphates as substrates. This chain is DNA-directed RNA polymerase subunit beta', found in Actinobacillus pleuropneumoniae serotype 7 (strain AP76).